The chain runs to 833 residues: Leucine--tRNA ligase (833 aa).

The short motif at 41-52 (PYPSGAGLHVGH) is the 'HIGH' region element. Positions 610 to 614 (KMSKS) match the 'KMSKS' region motif. Lys-613 is a binding site for ATP.

The protein belongs to the class-I aminoacyl-tRNA synthetase family.

The protein localises to the cytoplasm. The catalysed reaction is tRNA(Leu) + L-leucine + ATP = L-leucyl-tRNA(Leu) + AMP + diphosphate. This Streptococcus uberis (strain ATCC BAA-854 / 0140J) protein is Leucine--tRNA ligase.